The chain runs to 65 residues: Large ribosomal subunit protein bL28 (65 aa).

The interval 1–26 (MARRDALTGKSALSGQSRSHALNATK) is disordered. The segment covering 11–22 (SALSGQSRSHAL) has biased composition (polar residues).

It belongs to the bacterial ribosomal protein bL28 family.

The polypeptide is Large ribosomal subunit protein bL28 (Mycoplasma mycoides subsp. mycoides SC (strain CCUG 32753 / NCTC 10114 / PG1)).